Reading from the N-terminus, the 60-residue chain is Large ribosomal subunit protein bL32 (60 aa).

The protein belongs to the bacterial ribosomal protein bL32 family.

The protein is Large ribosomal subunit protein bL32 of Clostridium perfringens (strain ATCC 13124 / DSM 756 / JCM 1290 / NCIMB 6125 / NCTC 8237 / Type A).